Reading from the N-terminus, the 186-residue chain is Ribosome-recycling factor (186 aa).

Belongs to the RRF family.

The protein localises to the cytoplasm. Responsible for the release of ribosomes from messenger RNA at the termination of protein biosynthesis. May increase the efficiency of translation by recycling ribosomes from one round of translation to another. In Burkholderia cenocepacia (strain HI2424), this protein is Ribosome-recycling factor.